Here is a 665-residue protein sequence, read N- to C-terminus: Cyclic nucleotide-gated cation channel subunit A (665 aa).

Residues 1-110 (MRHFKVKAMV…DPTLQSHYRW (110 aa)) are Cytoplasmic-facing. Residues 111–131 (LAIVSLAVLYNIIFVVGRAVF) traverse the membrane as a helical segment. Residues 132–138 (WEINKSA) lie on the Extracellular side of the membrane. N-linked (GlcNAc...) asparagine glycosylation occurs at Asn135. Residues 139–159 (PAFWYTLDYLCDFIYLLDTLV) traverse the membrane as a helical segment. Residues 160-186 (HMHEGFLDQGLLVRDAFRLRRHYFHTK) lie on the Cytoplasmic side of the membrane. Residues 187 to 207 (GWYLDVLSMLPTDLAYIWWPP) form a helical membrane-spanning segment. The Extracellular portion of the chain corresponds to 208 to 253 (ETCSSLYLPCPVIVRLNRLLRINRLWEWFDRTETATGYPNAFRICK). Residues 254–274 (VVLAILVLIHWNACMYFAISY) traverse the membrane as a helical segment. The Cytoplasmic portion of the chain corresponds to 275-325 (EIGFSSDSWVYNLNGTRNNTLQRQYIYSFYWSTLTLTTIGETPTPENDVEY). A helical transmembrane segment spans residues 326–346 (LFVVADFLAGVLIFATIVGNI). Residues 347-481 (GSMISNMNVA…GKLSVVGDDG (135 aa)) lie on the Extracellular side of the membrane. Residues 437–559 (LLEA…DGLL), Glu496, and Arg511 contribute to the 3',5'-cyclic GMP site. Residues 482-502 (ITVLATLGAGSVFGEVSVLEI) form a helical membrane-spanning segment. At 503–665 (AGNRTGNRRT…SSDAAKQNTL (163 aa)) the chain is on the cytoplasmic side. Residues 633 to 665 (RSGRLYSLQPKRRPRSRPDATAKSSDAAKQNTL) form a disordered region. Polar residues predominate over residues 654-665 (AKSSDAAKQNTL).

The protein belongs to the cyclic nucleotide-gated cation channel (TC 1.A.1.5) family. In terms of tissue distribution, expressed in antennae and the visual system.

It localises to the membrane. In terms of biological role, approximately 50-fold more sensitive to cGMP than to cAMP. May be involved in transduction cascades of both invertebrate photoreceptors and olfactory sensillae. The sequence is that of Cyclic nucleotide-gated cation channel subunit A (CngA) from Drosophila melanogaster (Fruit fly).